The sequence spans 160 residues: SsrA-binding protein (160 aa).

The protein belongs to the SmpB family.

It localises to the cytoplasm. Functionally, required for rescue of stalled ribosomes mediated by trans-translation. Binds to transfer-messenger RNA (tmRNA), required for stable association of tmRNA with ribosomes. tmRNA and SmpB together mimic tRNA shape, replacing the anticodon stem-loop with SmpB. tmRNA is encoded by the ssrA gene; the 2 termini fold to resemble tRNA(Ala) and it encodes a 'tag peptide', a short internal open reading frame. During trans-translation Ala-aminoacylated tmRNA acts like a tRNA, entering the A-site of stalled ribosomes, displacing the stalled mRNA. The ribosome then switches to translate the ORF on the tmRNA; the nascent peptide is terminated with the 'tag peptide' encoded by the tmRNA and targeted for degradation. The ribosome is freed to recommence translation, which seems to be the essential function of trans-translation. This is SsrA-binding protein from Erwinia tasmaniensis (strain DSM 17950 / CFBP 7177 / CIP 109463 / NCPPB 4357 / Et1/99).